An 867-amino-acid chain; its full sequence is E3 ubiquitin-protein ligase SH3RF1 (867 aa).

The RING-type zinc finger occupies 12–53 (CPVCLERLDATAKVLPCQHTFCRRCLLGIVGSRGELRCPECR). The tract at residues 101–127 (AQGAGGSQRDPGPTGGQSQRVQAKSTP) is disordered. Over residues 116-125 (GQSQRVQAKS) the composition is skewed to polar residues. SH3 domains lie at 132-191 (PQLP…VIKP) and 194-257 (QPPP…FNSA). A disordered region spans residues 265–328 (DKPSEGGGDS…PPPQRHSMEI (64 aa)). A compositionally biased stretch (low complexity) spans 275–285 (SEGPSSSSSGP). An SH3 3 domain is found at 436 to 497 (QRPTVYVAMF…PGNYMSPVSR (62 aa)). Residues 706–794 (LSNKKKLRPS…APIAPPPRQP (89 aa)) form a disordered region. Residues 760-769 (SELSMSSSSS) show a composition bias toward low complexity. Over residues 770 to 784 (NTDAVTHRSSPQDNT) the composition is skewed to polar residues. An SH3 4 domain is found at 808 to 867 (IVCERYRVVVSYPPQSEAELELKEGDIVFVHKKREDGWFKGTLQRNGRTGLFPGSFVDSI).

It belongs to the SH3RF family. Post-translationally, autoubiquitinated. Ubiquitinated by SH3RF2, leading to proteasome-mediated degradation.

The protein resides in the cytoplasm. It localises to the perinuclear region. Its subcellular location is the cell projection. It is found in the lamellipodium. The protein localises to the golgi apparatus. The protein resides in the trans-Golgi network. It carries out the reaction S-ubiquitinyl-[E2 ubiquitin-conjugating enzyme]-L-cysteine + [acceptor protein]-L-lysine = [E2 ubiquitin-conjugating enzyme]-L-cysteine + N(6)-ubiquitinyl-[acceptor protein]-L-lysine.. It functions in the pathway protein modification; protein ubiquitination. Has E3 ubiquitin-protein ligase activity. In the absence of an external substrate, it can catalyze self-ubiquitination. Acts as a scaffold protein that contributes to the effective activation of the JNK signaling pathway. The polypeptide is E3 ubiquitin-protein ligase SH3RF1 (sh3rf1) (Danio rerio (Zebrafish)).